Consider the following 276-residue polypeptide: Elongation factor Ts, mitochondrial (276 aa).

This sequence belongs to the EF-Ts family.

Its subcellular location is the mitochondrion. In terms of biological role, associates with the EF-Tu.GDP complex and induces the exchange of GDP to GTP. It remains bound to the aminoacyl-tRNA.EF-Tu.GTP complex up to the GTP hydrolysis stage on the ribosome. The chain is Elongation factor Ts, mitochondrial from Leishmania major.